The sequence spans 106 residues: Small cardioactive peptide-related peptide (106 aa).

An N-terminal signal peptide occupies residues 1–20 (MFCKHLSFVAITICFLLVLA). Residues 21–41 (KTENEIQQKNIKFDQRTWRNM) constitute a propeptide, amino-terminal spacer peptide. Glutamine 52 is subject to Glutamine amide. A propeptide spans 55–106 (SDNQPDYTCCGMPLTKYVGICPIGMECCPGLKKVLQKSGQRTIYSVCVADAY) (carboxy-terminal spacer peptide).

Expression is seen in the peripheral and central nervous systems in tissues such as the brain, the inferior buccal ganglion, the gastric ganglion, the olfactory lobe, the peduncle lobe and the optic lobe. Expression in the brain is distributed in the median inferior frontal lobe, the superior buccal lobe, the prebranchial lobe and the pedal lobe. Not expressed in the vasomotor lobe or the palliovisceral lobe that controls the cardiac system.

It is found in the secreted. Evokes contractions in the radula protractor muscle, and may regulate feeding behavior and gut motility by controlling muscle contraction of the buccal mass. The protein is Small cardioactive peptide-related peptide of Octopus vulgaris (Common octopus).